Here is a 128-residue protein sequence, read N- to C-terminus: Probable 4-amino-4-deoxy-L-arabinose-phosphoundecaprenol flippase subunit ArnF (128 aa).

Residues 1-2 (MG) are Cytoplasmic-facing. Residues 3-23 (LMWGLFSVIIASVAQLSLGFA) form a helical membrane-spanning segment. Over 24-35 (ASHLPPMTHLWD) the chain is Periplasmic. A helical membrane pass occupies residues 36–56 (FIAALLAFGLDARILLLGLLG). At 57-76 (YLLSVFCWYKTLHKLALSKA) the chain is on the cytoplasmic side. Residues 77 to 97 (YALLSMSYVLVWIASMVLPGW) form a helical membrane-spanning segment. Residues 98-100 (EGT) are Periplasmic-facing. A helical membrane pass occupies residues 101 to 121 (FSLKALLGVACIMSGLMLIFL). The Cytoplasmic segment spans residues 122 to 128 (PTTKQRY).

It belongs to the ArnF family. Heterodimer of ArnE and ArnF.

The protein localises to the cell inner membrane. Its pathway is bacterial outer membrane biogenesis; lipopolysaccharide biosynthesis. In terms of biological role, translocates 4-amino-4-deoxy-L-arabinose-phosphoundecaprenol (alpha-L-Ara4N-phosphoundecaprenol) from the cytoplasmic to the periplasmic side of the inner membrane. The chain is Probable 4-amino-4-deoxy-L-arabinose-phosphoundecaprenol flippase subunit ArnF from Shigella sonnei (strain Ss046).